We begin with the raw amino-acid sequence, 428 residues long: MALETSAPEIADVEAYMRALGERARDASRMLARATTAQKNRALHAMAEALDAARETLETANRRDLEAGRANGLDEALLDRLALTPARIDSMIEGLRQVAALPDPVGEIRDMRYLPSGIQVGKMRVALGVVGIVYESRPNVTVDAASLCLKSGNATILRGGSEAIQSNRAIADCIRQGLAAADLDAACVQVVATTDRAAVGALIAMPEYVDVIVPRGGKGLIERISRDARVPVIKHLDGVCHVYVDRAADDAKAVAIADNAKTQRYSPCNTMETLLVHVDAAPRVLPELARLYASKGVELRACERARAWLADAVAATEDDWHAEYLAPILAVRVVDSLEEAIAHINTYGSHHTDAIVTESVTDARRFLAEVDSSSVMVNASTRFADGFEYGLGAEIGISTDKLHARGPVGLEGLTSEKYIVYGDGHVRS.

Belongs to the gamma-glutamyl phosphate reductase family.

The protein localises to the cytoplasm. It catalyses the reaction L-glutamate 5-semialdehyde + phosphate + NADP(+) = L-glutamyl 5-phosphate + NADPH + H(+). It participates in amino-acid biosynthesis; L-proline biosynthesis; L-glutamate 5-semialdehyde from L-glutamate: step 2/2. Functionally, catalyzes the NADPH-dependent reduction of L-glutamate 5-phosphate into L-glutamate 5-semialdehyde and phosphate. The product spontaneously undergoes cyclization to form 1-pyrroline-5-carboxylate. The sequence is that of Gamma-glutamyl phosphate reductase from Chromohalobacter salexigens (strain ATCC BAA-138 / DSM 3043 / CIP 106854 / NCIMB 13768 / 1H11).